A 49-amino-acid polypeptide reads, in one-letter code: MRVKITLACTETGDRTYITKKNKRNNPERLELKKYNPRLRKHTLHREVK.

It belongs to the bacterial ribosomal protein bL33 family.

The polypeptide is Large ribosomal subunit protein bL33B (Exiguobacterium sibiricum (strain DSM 17290 / CCUG 55495 / CIP 109462 / JCM 13490 / 255-15)).